The sequence spans 245 residues: Octopine transport system permease protein OccM (245 aa).

A run of 5 helical transmembrane segments spans residues 12 to 32, 57 to 77, 96 to 116, 163 to 183, and 199 to 219; these read FIALLAGIPLALKLAVFSIAV, FYIFAFRGTPLLVQIYIIYYG, AYWCALGALALNTAAYSAEIM, VLMVKSTSLASTITLMEITGI, and ACAGAIYLTMNFIAARLFALI. The ABC transmembrane type-1 domain maps to 19–216; it reads IPLALKLAVF…TMNFIAARLF (198 aa).

This sequence belongs to the binding-protein-dependent transport system permease family. HisMQ subfamily.

The protein resides in the cell inner membrane. In terms of biological role, component of the octopine active transport system probably consisting of four subunits: Q, M, P and T. The sequence is that of Octopine transport system permease protein OccM (occM) from Rhizobium meliloti (Ensifer meliloti).